The chain runs to 238 residues: MDLKLPPTNPTNPQQAKTFMKSIEEDEKNKAEDLDIIKKEDIDEPKQEDTTDGNGGGGIGIVPTLQNIVATVNLDCRLDLKTIALHARNAEYNPKRFAAVIMRIRDPKTTALIFASGKMVVTGAKSEDDSKLASRKYARIIQKLGFNAKFCDFKIQNIVGSTDVKFAIRLEGLAFAHGTFSSYEPELFPGLIYRMVKPKIVLLIFVSGKIVLTGAKKREEIYDAFESIYPVLNEFRKN.

Positions 1–58 are disordered; the sequence is MDLKLPPTNPTNPQQAKTFMKSIEEDEKNKAEDLDIIKKEDIDEPKQEDTTDGNGGGG. Residues 27-49 show a composition bias toward basic and acidic residues; the sequence is EKNKAEDLDIIKKEDIDEPKQED. A run of 2 repeats spans residues 65 to 141 and 155 to 232.

This sequence belongs to the TBP family. Belongs to the TFIID complex together with the TBP-associated factors (TAFs). Binds DNA as monomer.

The protein localises to the nucleus. In terms of biological role, general transcription factor that functions at the core of the DNA-binding multiprotein factor TFIID. Binding of TFIID to the TATA box is the initial transcriptional step of the pre-initiation complex (PIC), playing a role in the activation of eukaryotic genes transcribed by RNA polymerase II. The sequence is that of TATA-box-binding protein (TBP1) from Candida albicans (strain SC5314 / ATCC MYA-2876) (Yeast).